Reading from the N-terminus, the 61-residue chain is Small ribosomal subunit protein bS21 (61 aa).

Residues K40 to F61 are disordered. The segment covering V43–F61 has biased composition (basic residues).

The protein belongs to the bacterial ribosomal protein bS21 family.

The chain is Small ribosomal subunit protein bS21 from Ligilactobacillus salivarius (strain UCC118) (Lactobacillus salivarius).